The following is a 337-amino-acid chain: Anthranilate phosphoribosyltransferase (337 aa).

5-phospho-alpha-D-ribose 1-diphosphate-binding positions include Gly-81, 84 to 85, Ser-89, 91 to 94, 109 to 117, and Ala-121; these read GD, NVST, and KHGNRAATS. Gly-81 contacts anthranilate. Ser-93 provides a ligand contact to Mg(2+). Asn-112 is a binding site for anthranilate. Arg-167 lines the anthranilate pocket. The Mg(2+) site is built by Asp-226 and Glu-227.

It belongs to the anthranilate phosphoribosyltransferase family. In terms of assembly, homodimer. Mg(2+) is required as a cofactor.

It carries out the reaction N-(5-phospho-beta-D-ribosyl)anthranilate + diphosphate = 5-phospho-alpha-D-ribose 1-diphosphate + anthranilate. The protein operates within amino-acid biosynthesis; L-tryptophan biosynthesis; L-tryptophan from chorismate: step 2/5. Its function is as follows. Catalyzes the transfer of the phosphoribosyl group of 5-phosphorylribose-1-pyrophosphate (PRPP) to anthranilate to yield N-(5'-phosphoribosyl)-anthranilate (PRA). This Methylorubrum extorquens (strain PA1) (Methylobacterium extorquens) protein is Anthranilate phosphoribosyltransferase.